The primary structure comprises 539 residues: Interleukin-2 receptor subunit beta (539 aa).

The N-terminal stretch at 1-26 (MATIALPWSLSLYVFLLLLATPWASA) is a signal peptide. Topologically, residues 27–240 (AVKNCSHLEC…RTRPADPMKE (214 aa)) are extracellular. Asn-30, Asn-43, Asn-55, and Asn-71 each carry an N-linked (GlcNAc...) asparagine glycan. A disulfide bridge connects residues Cys-36 and Cys-46. A disulfide bridge connects residues Cys-74 and Cys-86. The Fibronectin type-III domain maps to 135 to 235 (APHSLQVLHI…QPLTFRTRPA (101 aa)). N-linked (GlcNAc...) asparagine glycans are attached at residues Asn-150 and Asn-216. The WSXWS motif signature appears at 221–225 (WSPWS). The chain crosses the membrane as a helical span at residues 241–268 (ILPMSWLRYLLLVLGCFSGFFSCVYILV). Residues 269-539 (KCRYLGPWLK…LQAQDSVHLI (271 aa)) are Cytoplasmic-facing. The Box 1 motif signature appears at 281–289 (LKCHIPDPS). Disordered regions lie at residues 395-419 (VEEDGSRLPEGSPHPPLLPLAGEQD), 440-465 (PNTAYGGSRAPEERSPLSLHEGLPSL), and 477-516 (LERMPEGDGEGLSANSSGEQASVPEGNLHGQDQDRGQGPI).

It belongs to the type I cytokine receptor family. Type 4 subfamily. As to quaternary structure, non-covalent dimer of an alpha and a beta subunit. IL2R exists in 3 different forms: a high affinity dimer, an intermediate affinity monomer (beta subunit), and a low affinity monomer (alpha subunit). The high and intermediate affinity forms also associate with a gamma subunit. Interacts with SHB upon interleukin stimulation.

Its subcellular location is the cell membrane. The protein localises to the cell surface. Functionally, receptor for interleukin-2. This beta subunit is involved in receptor mediated endocytosis and transduces the mitogenic signals of IL2. Probably in association with IL15RA, involved in the stimulation of neutrophil phagocytosis by IL15. This is Interleukin-2 receptor subunit beta (Il2rb) from Mus musculus (Mouse).